The primary structure comprises 350 residues: Protein-glutamate methylesterase/protein-glutamine glutaminase 1 (350 aa).

The Response regulatory domain occupies Met1 to Val116. The residue at position 50 (Asp50) is a 4-aspartylphosphate. Positions Leu160–His350 constitute a CheB-type methylesterase domain. Active-site residues include Ser172, His198, and Asp294.

This sequence belongs to the CheB family. Phosphorylated by CheA. Phosphorylation of the N-terminal regulatory domain activates the methylesterase activity.

The protein resides in the cytoplasm. The enzyme catalyses [protein]-L-glutamate 5-O-methyl ester + H2O = L-glutamyl-[protein] + methanol + H(+). It carries out the reaction L-glutaminyl-[protein] + H2O = L-glutamyl-[protein] + NH4(+). In terms of biological role, involved in chemotaxis. Part of a chemotaxis signal transduction system that modulates chemotaxis in response to various stimuli. Catalyzes the demethylation of specific methylglutamate residues introduced into the chemoreceptors (methyl-accepting chemotaxis proteins or MCP) by CheR. Also mediates the irreversible deamidation of specific glutamine residues to glutamic acid. The chain is Protein-glutamate methylesterase/protein-glutamine glutaminase 1 from Photobacterium profundum (strain SS9).